The primary structure comprises 443 residues: Chromosome partition protein MukF (443 aa).

The interval 209 to 237 (LDETSINLRELQDTLNAAGDKLQSQLLRI) is leucine-zipper.

The protein belongs to the MukF family. In terms of assembly, interacts, and probably forms a ternary complex, with MukE and MukB via its C-terminal region. The complex formation is stimulated by calcium or magnesium. It is required for an interaction between MukE and MukB.

The protein localises to the cytoplasm. It localises to the nucleoid. In terms of biological role, involved in chromosome condensation, segregation and cell cycle progression. May participate in facilitating chromosome segregation by condensation DNA from both sides of a centrally located replisome during cell division. Not required for mini-F plasmid partitioning. Probably acts via its interaction with MukB and MukE. Overexpression results in anucleate cells. It has a calcium binding activity. The chain is Chromosome partition protein MukF from Haemophilus ducreyi (strain 35000HP / ATCC 700724).